Here is a 234-residue protein sequence, read N- to C-terminus: Thiamine import ATP-binding protein ThiQ (234 aa).

One can recognise an ABC transporter domain in the interval leucine 2–leucine 230. Glycine 32 to serine 39 is a binding site for ATP.

This sequence belongs to the ABC transporter superfamily. Thiamine importer (TC 3.A.1.19.1) family. In terms of assembly, the complex is composed of two ATP-binding proteins (ThiQ), two transmembrane proteins (ThiP) and a solute-binding protein (ThiB).

It is found in the cell inner membrane. The enzyme catalyses thiamine(out) + ATP + H2O = thiamine(in) + ADP + phosphate + H(+). Part of the ABC transporter complex ThiBPQ involved in thiamine import. Responsible for energy coupling to the transport system. The chain is Thiamine import ATP-binding protein ThiQ from Aliivibrio fischeri (strain ATCC 700601 / ES114) (Vibrio fischeri).